Here is a 393-residue protein sequence, read N- to C-terminus: Cysteine protease ATG4B (393 aa).

Residue M1 is modified to N-acetylmethionine. S34 carries the post-translational modification Phosphoserine; by PKB/AKT1 and PKB/AKT2. Catalysis depends on C74, which acts as the Nucleophile. C189 carries the post-translational modification S-nitrosocysteine. Residues D278 and H280 contribute to the active site. Residues C292 and C301 each carry the S-nitrosocysteine modification. C292 and C361 are disulfide-bonded. Position 316 is a phosphoserine; by ULK1 (S316). A Phosphoserine; by STK26 modification is found at S383. Positions 388–391 (FEIL) match the LIR motif. S392 is subject to Phosphoserine.

It belongs to the peptidase C54 family. Interacts with PFKP; promoting phosphorylation of ATG4B at Ser-34. Interacts with GBP7. Phosphorylation at Ser-383 and Ser-392 promotes autophagy by increasing protein delipidation activity without affecting proteolytic activation of ATG8 proteins. Phosphorylation at Ser-316 by ULK1 inhibits autophagy by decreasing both proteolytic activation and delipidation activities. Phosphorylation at Ser-316 is dephosphorylated by protein phosphatase 2A (PP2A). Phosphorylation at Ser-34 by AKT2 promotes its hydrolase activity, leading to increased proteolytic activation and delipidation of ATG8 family proteins. Phosphorylation at Ser-34 by AKT1 promotes mitochondrial localization and inhibition of the F1F0-ATP synthase activity, leading to elevation of mitochondrial reactive oxygen species (ROS). Post-translationally, ubiquitinated by RNF5, leading to its degradation by the proteasome. In terms of processing, S-nitrosylation at Cys-189 and Cys-292 in response to high glucose decreases both proteolytic activation and delipidation activities. O-glycosylated by OGT, leading to increase protease activity, thereby promoting the proteolytic activation of ATG8 family proteins. Post-translationally, forms reversible intrachain disulfide bonds in response to oxidative stress. Forms interchain disulfide bonds, leading to formation of homooligomers in response to oxidation.

It localises to the cytoplasm. The protein resides in the cytosol. It is found in the cytoplasmic vesicle. The protein localises to the autophagosome. Its subcellular location is the endoplasmic reticulum. It localises to the mitochondrion. It catalyses the reaction [protein]-C-terminal L-amino acid-glycyl-phosphatidylethanolamide + H2O = [protein]-C-terminal L-amino acid-glycine + a 1,2-diacyl-sn-glycero-3-phosphoethanolamine. It carries out the reaction [protein]-C-terminal L-amino acid-glycyl-phosphatidylserine + H2O = [protein]-C-terminal L-amino acid-glycine + a 1,2-diacyl-sn-glycero-3-phospho-L-serine. Inhibited by N-ethylmaleimide. Redox-regulated during autophagy since reducing conditions activate ATG4A whereas an oxidizing environment such as the presence of H(2)O(2) inhibits its activity. The cysteine protease activity compounds is inhibited by styrylquinoline compounds 4-28 and LV-320. Functionally, cysteine protease that plays a key role in autophagy by mediating both proteolytic activation and delipidation of ATG8 family proteins. Required for canonical autophagy (macroautophagy), non-canonical autophagy as well as for mitophagy. The protease activity is required for proteolytic activation of ATG8 family proteins: cleaves the C-terminal amino acid of ATG8 proteins MAP1LC3A, MAP1LC3B, MAP1LC3C, GABARAPL1, GABARAPL2 and GABARAP, to reveal a C-terminal glycine. Exposure of the glycine at the C-terminus is essential for ATG8 proteins conjugation to phosphatidylethanolamine (PE) and insertion to membranes, which is necessary for autophagy. Protease activity is also required to counteract formation of high-molecular weight conjugates of ATG8 proteins (ATG8ylation): acts as a deubiquitinating-like enzyme that removes ATG8 conjugated to other proteins, such as ATG3. In addition to the protease activity, also mediates delipidation of ATG8 family proteins. Catalyzes delipidation of PE-conjugated forms of ATG8 proteins during macroautophagy. Also involved in non-canonical autophagy, a parallel pathway involving conjugation of ATG8 proteins to single membranes at endolysosomal compartments, by catalyzing delipidation of ATG8 proteins conjugated to phosphatidylserine (PS). Compared to other members of the family (ATG4A, ATG4C or ATG4C), constitutes the major protein for proteolytic activation of ATG8 proteins, while it displays weaker delipidation activity than other ATG4 paralogs. Involved in phagophore growth during mitophagy independently of its protease activity and of ATG8 proteins: acts by regulating ATG9A trafficking to mitochondria and promoting phagophore-endoplasmic reticulum contacts during the lipid transfer phase of mitophagy. The chain is Cysteine protease ATG4B from Homo sapiens (Human).